A 1833-amino-acid chain; its full sequence is Protein TIC 214 (1833 aa).

Helical transmembrane passes span 18–38 (IINS…FSIG), 67–87 (FIMG…HLAL), 90–110 (PHTI…WNNH), 127–147 (LSIQ…YFIL), 175–195 (VGWL…LVWI), and 218–238 (IFSI…PSPI). A disordered region spans residues 254–301 (EETNLEIEKTSETKETKQEEEGFTEEDPSPSLFSEEKEDPDKIDETEK). 2 stretches are compositionally biased toward basic and acidic residues: residues 259–273 (EIEK…KQEE) and 292–301 (DPDKIDETEK).

It belongs to the TIC214 family. Part of the Tic complex.

The protein resides in the plastid. It is found in the chloroplast inner membrane. Functionally, involved in protein precursor import into chloroplasts. May be part of an intermediate translocation complex acting as a protein-conducting channel at the inner envelope. This Spinacia oleracea (Spinach) protein is Protein TIC 214.